The sequence spans 454 residues: Tubulin alpha chain (454 aa).

The GTP site is built by Gln12, Asp72, Ser141, Gly145, Thr146, Thr180, Asn207, and Asn229. Asp72 serves as a coordination point for Mg(2+). The active site involves Glu255.

It belongs to the tubulin family. As to quaternary structure, dimer of alpha and beta chains. A typical microtubule is a hollow water-filled tube with an outer diameter of 25 nm and an inner diameter of 15 nM. Alpha-beta heterodimers associate head-to-tail to form protofilaments running lengthwise along the microtubule wall with the beta-tubulin subunit facing the microtubule plus end conferring a structural polarity. Microtubules usually have 13 protofilaments but different protofilament numbers can be found in some organisms and specialized cells. It depends on Mg(2+) as a cofactor.

It localises to the cytoplasm. Its subcellular location is the cytoskeleton. The catalysed reaction is GTP + H2O = GDP + phosphate + H(+). Functionally, tubulin is the major constituent of microtubules, a cylinder consisting of laterally associated linear protofilaments composed of alpha- and beta-tubulin heterodimers. Microtubules grow by the addition of GTP-tubulin dimers to the microtubule end, where a stabilizing cap forms. Below the cap, tubulin dimers are in GDP-bound state, owing to GTPase activity of alpha-tubulin. The polypeptide is Tubulin alpha chain (TUB1) (Colletotrichum orbiculare (strain 104-T / ATCC 96160 / CBS 514.97 / LARS 414 / MAFF 240422) (Cucumber anthracnose fungus)).